Here is a 382-residue protein sequence, read N- to C-terminus: Mannitol-1-phosphate 5-dehydrogenase (382 aa).

An NAD(+)-binding site is contributed by 4–15 (AVHFGAGNIGRG).

This sequence belongs to the mannitol dehydrogenase family. In terms of assembly, monomer.

It carries out the reaction D-mannitol 1-phosphate + NAD(+) = beta-D-fructose 6-phosphate + NADH + H(+). In Streptococcus mutans serotype c (strain ATCC 700610 / UA159), this protein is Mannitol-1-phosphate 5-dehydrogenase (mtlD).